The following is a 282-amino-acid chain: Aquaporin PIP2-7 (282 aa).

The interval 1-21 (MSKEVSVEGEQPPVKDYTDPP) is disordered. The Cytoplasmic portion of the chain corresponds to 1–38 (MSKEVSVEGEQPPVKDYTDPPPEPLLNFGELRLWSFYR). The chain crosses the membrane as a helical span at residues 39–59 (ALIAEFVATLLFLYVTIATVI). The Extracellular segment spans residues 60 to 71 (GHKEQNAADQCS). The helical transmembrane segment at 72-92 (GVGLLGIAWAFGGMIFILVYC) threads the bilayer. The Cytoplasmic segment spans residues 93-120 (TAGISGGHINPAVTLGLFLARKVSLIRA). An NPA 1 motif is present at residues 102–104 (NPA). A helical membrane pass occupies residues 121–141 (LLYMVAQCLGAIVGVGIVKGI). Over 142–162 (MKHQYNSLGGGANVVAAGYSK) the chain is Extracellular. Residues 163 to 183 (GTALGAEIIGTFVLVYTVFSA) form a helical membrane-spanning segment. Over 184–196 (TDPKRSARDSHVP) the chain is Cytoplasmic. The chain crosses the membrane as a helical span at residues 197–217 (VLAPLPIGFAVFMVHLATIPI). Over 218-244 (TGTGINPARSLGAAVIYNQDKPWDDHW) the chain is Extracellular. Positions 223–225 (NPA) match the NPA 2 motif. The helical transmembrane segment at 245-265 (ILWVGPFVGALAAAAYHQYIL) threads the bilayer. At 266–282 (RAAAIKALGSFRSNPSN) the chain is on the cytoplasmic side.

Belongs to the MIP/aquaporin (TC 1.A.8) family. PIP (TC 1.A.8.11) subfamily. Expressed in roots, leaves and fruits.

It is found in the cell membrane. Its function is as follows. Water channel required to facilitate the transport of water across cell membrane; mercury-insensitive. Contributes to the tolerance to multiple abiotic stresses including salt (NaCl), cold and water deprivation, by modulating cytosolic K(+)/Na(+) ratio, maintaining osmotic balance, and reducing membrane injury (e.g. oxidative injury). Also regulates the expression of abscisic acid (ABA)- biosynthetic and -responsive genes during dehydration and salt stresses. The polypeptide is Aquaporin PIP2-7 (Musa acuminata (Banana)).